The chain runs to 158 residues: NADH-quinone oxidoreductase subunit B 1 (158 aa).

Residues Cys37, Cys38, Cys102, and Cys132 each coordinate [4Fe-4S] cluster.

This sequence belongs to the complex I 20 kDa subunit family. As to quaternary structure, NDH-1 is composed of 14 different subunits. Subunits NuoB, C, D, E, F, and G constitute the peripheral sector of the complex. Requires [4Fe-4S] cluster as cofactor.

The protein resides in the cell inner membrane. It catalyses the reaction a quinone + NADH + 5 H(+)(in) = a quinol + NAD(+) + 4 H(+)(out). NDH-1 shuttles electrons from NADH, via FMN and iron-sulfur (Fe-S) centers, to quinones in the respiratory chain. Couples the redox reaction to proton translocation (for every two electrons transferred, four hydrogen ions are translocated across the cytoplasmic membrane), and thus conserves the redox energy in a proton gradient. The polypeptide is NADH-quinone oxidoreductase subunit B 1 (Azoarcus sp. (strain BH72)).